The following is a 475-amino-acid chain: Aspartyl/glutamyl-tRNA(Asn/Gln) amidotransferase subunit B (475 aa).

It belongs to the GatB/GatE family. GatB subfamily. As to quaternary structure, heterotrimer of A, B and C subunits.

The catalysed reaction is L-glutamyl-tRNA(Gln) + L-glutamine + ATP + H2O = L-glutaminyl-tRNA(Gln) + L-glutamate + ADP + phosphate + H(+). The enzyme catalyses L-aspartyl-tRNA(Asn) + L-glutamine + ATP + H2O = L-asparaginyl-tRNA(Asn) + L-glutamate + ADP + phosphate + 2 H(+). Allows the formation of correctly charged Asn-tRNA(Asn) or Gln-tRNA(Gln) through the transamidation of misacylated Asp-tRNA(Asn) or Glu-tRNA(Gln) in organisms which lack either or both of asparaginyl-tRNA or glutaminyl-tRNA synthetases. The reaction takes place in the presence of glutamine and ATP through an activated phospho-Asp-tRNA(Asn) or phospho-Glu-tRNA(Gln). The polypeptide is Aspartyl/glutamyl-tRNA(Asn/Gln) amidotransferase subunit B (Lysinibacillus sphaericus (strain C3-41)).